The chain runs to 558 residues: MCRFVDAIKSLLDESDITTLVALANRLSPFRVDYRRVVVGDALSVKPILVLEHEQPPCDGAWRSAAHINLGLGAAQQQHHPVPTRAVHGAAVGGVQCDGLASPPVSNNVMSDGTVDGDDDDLGYDQDTLYNQGTDYENEGGAVGQDGLPAPDAGLFQECMFSHRSASTPRAGGHGESYCQEVAQSSHAITCRELLERCILPNFEINHLENCESSTSGGIHHCLPDEHSGMTGLARNTPSASPVENSITVELDGALEIATDVRTGKFNTLRAAKRHRRNTSSLRLSSHDAGCVGDARSSAGVVKSPARRSTAVSDAALRKVKYAARTCIRADYFQFLEANLPRWVRDGIWGKEWSPNQTANVDGYENLQKAYWHVCRLDRQMRDDAIRSRMAMVLLHLEYENTCLSWKTCAHSGKKPVTKVGRGNISSLIDNIIENTHPEWRTADPGERSELRAKFHDRKRYGKRWWMLVKPLGSSILMLCSSKFAGMIKNTTVTAAMINEIKLAIQRSETGLMSLLSLANPIAESLFLDQGYDGHNAEQVLKALRAARLEVAPGEGVA.

It belongs to the POU transcription factor family. Class-3 subfamily.

It is found in the nucleus. Transcription factor that regulates the expression of the gene cluster that mediates the biosynthesis of aurovertins, fungal polyketides that exhibit potent inhibition of adenosine triphosphate synthase. This chain is Aurovertin biosynthesis cluster transcription factor aurF, found in Calcarisporium arbuscula (Dendryphion arbuscula).